Consider the following 113-residue polypeptide: Integration host factor subunit alpha (113 aa).

The tract at residues 59–80 is disordered; the sequence is GNFQVRDKPPRPGRNPKTGETI.

It belongs to the bacterial histone-like protein family. As to quaternary structure, heterodimer of an alpha and a beta chain.

In terms of biological role, this protein is one of the two subunits of integration host factor, a specific DNA-binding protein that functions in genetic recombination as well as in transcriptional and translational control. The polypeptide is Integration host factor subunit alpha (Bordetella bronchiseptica (strain ATCC BAA-588 / NCTC 13252 / RB50) (Alcaligenes bronchisepticus)).